We begin with the raw amino-acid sequence, 144 residues long: Large ribosomal subunit protein uL11 (144 aa).

The protein belongs to the universal ribosomal protein uL11 family. In terms of assembly, part of the ribosomal stalk of the 50S ribosomal subunit. Interacts with L10 and the large rRNA to form the base of the stalk. L10 forms an elongated spine to which L12 dimers bind in a sequential fashion forming a multimeric L10(L12)X complex. In terms of processing, one or more lysine residues are methylated.

Functionally, forms part of the ribosomal stalk which helps the ribosome interact with GTP-bound translation factors. This is Large ribosomal subunit protein uL11 from Frankia alni (strain DSM 45986 / CECT 9034 / ACN14a).